The following is a 410-amino-acid chain: Argininosuccinate synthase (410 aa).

ATP contacts are provided by residues 13–21 (AYSGGLDTS) and Ala40. L-citrulline contacts are provided by Tyr91 and Ser96. ATP is bound at residue Gly121. L-aspartate-binding residues include Thr123, Asn127, and Asp128. Asn127 contacts L-citrulline. Residues Arg131, Ser182, Ser191, Glu267, and Tyr279 each coordinate L-citrulline.

This sequence belongs to the argininosuccinate synthase family. Type 1 subfamily. Homotetramer.

Its subcellular location is the cytoplasm. The catalysed reaction is L-citrulline + L-aspartate + ATP = 2-(N(omega)-L-arginino)succinate + AMP + diphosphate + H(+). It functions in the pathway amino-acid biosynthesis; L-arginine biosynthesis; L-arginine from L-ornithine and carbamoyl phosphate: step 2/3. This is Argininosuccinate synthase from Gluconobacter oxydans (strain 621H) (Gluconobacter suboxydans).